Consider the following 1134-residue polypeptide: Spermatogenesis-associated protein 31C2 (1134 aa).

A helical membrane pass occupies residues 23-43; the sequence is PWVLDIFLTLVFALGFFFLLL. 7 disordered regions span residues 54–87, 115–243, 477–504, 524–561, 727–807, 928–1007, and 1111–1134; these read PPSP…NHSL, LEKG…LLTP, PGTS…EAQT, TPQN…DSGS, MPER…PTVP, NMGH…PSIS, and AASS…IRDQ. Residues 59–87 show a composition bias toward basic residues; it reads PKKRKRHLVSQRPAGRRGRPRGRMKNHSL. Over residues 132-148 the composition is skewed to basic and acidic residues; it reads VGKRTPDGASRSSHEPT. A compositionally biased stretch (low complexity) spans 185 to 201; the sequence is SSLSASQPPEPSLLLEH. A compositionally biased stretch (pro residues) spans 204–235; sequence PEPPALFPHPPRTPDPLACSPPPPKGFTPPPL. A compositionally biased stretch (polar residues) spans 489-504; that stretch reads WQSSTSTGESSKEAQT. Composition is skewed to polar residues over residues 773–794 and 937–948; these read LTYS…SSRA and PNCQGSCKSQSP. Positions 954-970 are enriched in basic and acidic residues; the sequence is HKRENSRKPNLEKHEEM. Residues 1111-1124 are compositionally biased toward polar residues; that stretch reads AASSQQATLKNQSR. Basic and acidic residues predominate over residues 1125 to 1134; it reads PNRDRQIRDQ.

Belongs to the SPATA31 family.

The protein resides in the membrane. May play a role in spermatogenesis. The sequence is that of Spermatogenesis-associated protein 31C2 (SPATA31C2) from Homo sapiens (Human).